Here is a 141-residue protein sequence, read N- to C-terminus: Hemoglobin subunit alpha (141 aa).

Positions 1-141 constitute a Globin domain; that stretch reads VLSPADKTNV…VSTVLTSKYR (141 aa). At Ser-3 the chain carries Phosphoserine. Lys-7 carries the N6-succinyllysine modification. Position 8 is a phosphothreonine (Thr-8). The residue at position 11 (Lys-11) is an N6-succinyllysine. The residue at position 16 (Lys-16) is an N6-acetyllysine; alternate. Lys-16 carries the post-translational modification N6-succinyllysine; alternate. Position 24 is a phosphotyrosine (Tyr-24). Phosphoserine is present on Ser-35. Lys-40 is modified (N6-succinyllysine). Ser-49 carries the post-translational modification Phosphoserine. His-58 serves as a coordination point for O2. His-87 serves as a coordination point for heme b. A Phosphoserine modification is found at Ser-102. Residue Thr-108 is modified to Phosphothreonine. At Ser-124 the chain carries Phosphoserine. Phosphothreonine is present on residues Thr-134 and Thr-137. Ser-138 is subject to Phosphoserine.

It belongs to the globin family. As to quaternary structure, heterotetramer of two alpha chains and two beta chains. In terms of tissue distribution, red blood cells.

Involved in oxygen transport from the lung to the various peripheral tissues. Functionally, hemopressin acts as an antagonist peptide of the cannabinoid receptor CNR1. Hemopressin-binding efficiently blocks cannabinoid receptor CNR1 and subsequent signaling. This is Hemoglobin subunit alpha (HBA) from Lutra lutra (European river otter).